The chain runs to 1006 residues: Retinoblastoma-related protein (1006 aa).

The domain A stretch occupies residues 411 to 604; sequence TPVTTAMTTA…EKGSSMYNSL (194 aa). The pocket stretch occupies residues 411 to 855; it reads TPVTTAMTTA…NEIFVPAVKP (445 aa). Positions 605–724 are spacer; sequence IVARPALSAE…PGGGGETCAE (120 aa). The interval 725–855 is domain B; that stretch reads TAVNVFFSKI…NEIFVPAVKP (131 aa). Residues 866–893 are compositionally biased toward polar residues; the sequence is AQSGSQVPEAKNNTNGVNPSSPRTSSFP. The interval 866 to 898 is disordered; that stretch reads AQSGSQVPEAKNNTNGVNPSSPRTSSFPSLPDM.

The protein belongs to the retinoblastoma protein (RB) family.

The protein localises to the nucleus. In terms of biological role, regulator of biological processes that recruits a histone deacetylase to control gene transcription. May play a role in the entry into mitosis, negatively regulating the cell proliferation. Formation of stable complexes with geminiviridae replication-associated proteins may create a cellular environment which favors viral DNA replication. The polypeptide is Retinoblastoma-related protein (RB) (Scutellaria baicalensis (Baical skullcap)).